Here is a 342-residue protein sequence, read N- to C-terminus: S-adenosylmethionine:tRNA ribosyltransferase-isomerase (342 aa).

It belongs to the QueA family. As to quaternary structure, monomer.

Its subcellular location is the cytoplasm. It catalyses the reaction 7-aminomethyl-7-carbaguanosine(34) in tRNA + S-adenosyl-L-methionine = epoxyqueuosine(34) in tRNA + adenine + L-methionine + 2 H(+). Its pathway is tRNA modification; tRNA-queuosine biosynthesis. Its function is as follows. Transfers and isomerizes the ribose moiety from AdoMet to the 7-aminomethyl group of 7-deazaguanine (preQ1-tRNA) to give epoxyqueuosine (oQ-tRNA). The polypeptide is S-adenosylmethionine:tRNA ribosyltransferase-isomerase (Streptococcus pyogenes serotype M12 (strain MGAS2096)).